The primary structure comprises 186 residues: Putative inactive recombination-promoting nuclease-like protein YjiQ (186 aa).

It belongs to the Rpn/YhgA-like nuclease family.

This pseudogene is the C-terminal fragment of low activity DNA endonuclease RpnD which probably yields 3'-hydroxyl ends. The intact protein can be seen in this entry (AC B7NGZ6). Expression of the repaired protein increases the frequency of recA-independent recombination, but also decreases viability probably via DNA damage; in a RecA strain expression has no effect on viability but does induce the SOS repair response. May play a role in horizontal gene transfer. This Escherichia coli (strain K12) protein is Putative inactive recombination-promoting nuclease-like protein YjiQ (yjiQ).